We begin with the raw amino-acid sequence, 449 residues long: MNSANDGSVKKYVSQRRTVDMSSPYDRLYFYKKHAIPLRTIQPESTYTADIMPPDAYRDHRRVLNIPTKFTHLSSNKVKHVIPAITWTPEGRRLVVATYSGEFSLWNGSSFNFESIMQAHDSAVTVMQYSHAGDWLISGDADGTIKIWQPNFNMVKVLDRAHTECMRDISFSYSDQKFVTCSDDNVLKIWNFSNGQQERVLSGHHWDVKSCDWHPKMGLIVSGSKDNLIKLWDPRTGRNVSTILGLKHTVIKTKFQPTQGNLLAVVSKDKSIKIYDMRQHMRELQTIRDDMDYMSLSWHPINETIFSVGCYNGAIKHFDLLHDNSNSTPACHTIPYAHEKSVTSLAYSPVGHILASAAKDRTIRFWARSRPVDPNAFDDPTYNNKKVNAWYFGINNNINAVRPKTEHGIALPPANETNLGTPQPSILGSESIAANNGNVPASGLPGLSF.

7 WD repeats span residues 77-116 (KVKHVIPAITWTPEGRRLVVATYSGEFSLWNGSSFNFESI), 119-158 (AHDSAVTVMQYSHAGDWLISGDADGTIKIWQPNFNMVKVL), 161-200 (AHTECMRDISFSYSDQKFVTCSDDNVLKIWNFSNGQQERV), 203-242 (GHHWDVKSCDWHPKMGLIVSGSKDNLIKLWDPRTGRNVST), 245-285 (GLKH…RELQ), 288-328 (RDDM…SNST), and 337-376 (AHEKSVTSLAYSPVGHILASAAKDRTIRFWARSRPVDPNA). The tract at residues 411-432 (LPPANETNLGTPQPSILGSESI) is disordered. Residues 415–432 (NETNLGTPQPSILGSESI) are compositionally biased toward polar residues.

It is found in the nucleus. In terms of biological role, required for 3'-end cleavage and polyadenylation of pre-mRNAs. Also involved in chromosome segregation where it has a role in chromosome attachment to the mitotic spindle. The sequence is that of Polyadenylation factor subunit 2 (PSF2) from Eremothecium gossypii (strain ATCC 10895 / CBS 109.51 / FGSC 9923 / NRRL Y-1056) (Yeast).